Here is a 353-residue protein sequence, read N- to C-terminus: Probable dual-specificity RNA methyltransferase RlmN (353 aa).

Glu-95 acts as the Proton acceptor in catalysis. The Radical SAM core domain occupies 103–333; that stretch reads DGGRKTICIS…PILNRRSPGR (231 aa). A disulfide bridge links Cys-110 with Cys-339. The [4Fe-4S] cluster site is built by Cys-117, Cys-121, and Cys-124. S-adenosyl-L-methionine contacts are provided by residues 164–165, Ser-196, 219–221, and Asn-296; these read GE and SLN. The active-site S-methylcysteine intermediate is Cys-339.

It belongs to the radical SAM superfamily. RlmN family. [4Fe-4S] cluster serves as cofactor.

The protein localises to the cytoplasm. It catalyses the reaction adenosine(2503) in 23S rRNA + 2 reduced [2Fe-2S]-[ferredoxin] + 2 S-adenosyl-L-methionine = 2-methyladenosine(2503) in 23S rRNA + 5'-deoxyadenosine + L-methionine + 2 oxidized [2Fe-2S]-[ferredoxin] + S-adenosyl-L-homocysteine. The catalysed reaction is adenosine(37) in tRNA + 2 reduced [2Fe-2S]-[ferredoxin] + 2 S-adenosyl-L-methionine = 2-methyladenosine(37) in tRNA + 5'-deoxyadenosine + L-methionine + 2 oxidized [2Fe-2S]-[ferredoxin] + S-adenosyl-L-homocysteine. Specifically methylates position 2 of adenine 2503 in 23S rRNA and position 2 of adenine 37 in tRNAs. The protein is Probable dual-specificity RNA methyltransferase RlmN of Leptospira biflexa serovar Patoc (strain Patoc 1 / Ames).